The sequence spans 471 residues: Eremophilane O-acetyltransferase prx11 (471 aa).

It belongs to the fumigaclavine B O-acetyltransferase family. Monomer.

It participates in sesquiterpene biosynthesis. In terms of biological role, O-acetyltransferase; part of the gene cluster that mediates the biosynthesis of PR-toxin, a bicyclic sesquiterpene belonging to the eremophilane class and acting as a mycotoxin. The first step of the pathway is catalyzed by the aristolochene synthase which performs the cyclization of trans,trans-farnesyl diphosphate (FPP) to the bicyclic sesquiterpene aristolochene. Following the formation of aristolochene, the non-oxygenated aristolochene is converted to the trioxygenated intermediate eremofortin B, via 7-epi-neopetasone. This conversion appears to involve three enzymes, a hydroxysterol oxidase-like enzyme, the quinone-oxidase prx3 that forms the quinone-type-structure in the bicyclic nucleus of aristolochene with the C8-oxo group and the C-3 hydroxyl group, and the P450 monooxygenase prx9 that introduces the epoxide at the double bond between carbons 1 and 2. No monoxy or dioxy-intermediates have been reported to be released to the broth, so these three early oxidative reactions may be coupled together. Eremofortin B is further oxidized by another P450 monooxygenase, that introduces a second epoxide between carbons 7 and 11 prior to acetylation to eremofortin A by the acetyltransferase prx11. The second epoxidation may be performed by a second P450 monooxygenase. After the acetylation step, eremofortin A is converted to eremofortin C and then to PR-toxin. First the conversion of eremofortin A to eremofortin C proceeds by oxidation of the side chain of the molecule at C-12 and is catalyzed by the short-chain oxidoreductase prx1. The cytochrome P450 monooxygenase prx8 also plays a role in this step. The primary alcohol formed at C-12 is finally oxidized by the short-chain alcohol dehydrogenase prx4 that forms PR-toxin. This Penicillium rubens (strain ATCC 28089 / DSM 1075 / NRRL 1951 / Wisconsin 54-1255) (Penicillium chrysogenum) protein is Eremophilane O-acetyltransferase prx11.